The sequence spans 735 residues: MKVYAFGFPKIGEKREFKKALEDFWKGKITENQFKEEMSELRMYMVENYRTNVDVVPSNELSYYDFVLDTAIMVGAIPERFGKYEGLSTYFEMARGRKALEMTKYFNTNYHYLVPEIESGNFELLENIPLEDFLFFRSMGIETAPRILGPFTFLYLSKKDGMWIREPGEMEKLFTRLVPVYRKVFEELVENGCGEILVDEPAFVCDLQKDHWNLIKDVYSEFSGFPLTIFTYYDSVSDYESYVSLPVKGLHLDFVSNTENLRNFEKHGFPSDKTLIAGVINGRQPWRANLKKVAELVDKLGASAISNSCPLFHLPITAQWENSLPDGLREKLAFAKEKLEELKVLKEFFEGKKVNLPEVSFEDFAVDESVSKKIKQLTPDSFRREKEYQERDRIQREELKLPLFPTTTIGSFPQTSDVRKMRARYRRGEISEEEYESFIKEQIKKVVRIQEEIGLDVLVHGEFERTDMVEFFAEKLNGIATTQNGWVLSYGSRCYRPPIIYGTVSRTGPMTLKEITYAQSLTEKPVKGMLTGPITIMGWSYYREDIPEREIAYQIALAINEEVKDLEEAGIKIVQIDEPAFREKAPVKKSKWPEYFEWAINAFNLAANARPETQIHAHMCYSDFNEIIEYIHQLEFDVISIEASRSKGEIISAFENFKGWIKQIGVGVWDIHSPAVPSVDEMKSIIERVLRILPKELIWVNPDCGLKTRNWEEVVPSLKNMVDLAKKLRKEYNNT.

Residues 15–18 and Lys-104 each bind 5-methyltetrahydropteroyltri-L-glutamate; that span reads REFK. Residues 409–411 and Glu-462 contribute to the L-homocysteine site; that span reads IGS. L-methionine is bound by residues 409–411 and Glu-462; that span reads IGS. 5-methyltetrahydropteroyltri-L-glutamate contacts are provided by residues 493–494 and Trp-539; that span reads RC. Asp-577 contacts L-homocysteine. Asp-577 contributes to the L-methionine binding site. Glu-583 contacts 5-methyltetrahydropteroyltri-L-glutamate. His-618, Cys-620, and Glu-642 together coordinate Zn(2+). His-672 functions as the Proton donor in the catalytic mechanism. Position 704 (Cys-704) interacts with Zn(2+).

The protein belongs to the vitamin-B12 independent methionine synthase family. Requires Zn(2+) as cofactor.

It carries out the reaction 5-methyltetrahydropteroyltri-L-glutamate + L-homocysteine = tetrahydropteroyltri-L-glutamate + L-methionine. The protein operates within amino-acid biosynthesis; L-methionine biosynthesis via de novo pathway; L-methionine from L-homocysteine (MetE route): step 1/1. Functionally, catalyzes the transfer of a methyl group from 5-methyltetrahydrofolate to homocysteine resulting in methionine formation. This chain is 5-methyltetrahydropteroyltriglutamate--homocysteine methyltransferase, found in Thermotoga petrophila (strain ATCC BAA-488 / DSM 13995 / JCM 10881 / RKU-1).